The primary structure comprises 228 residues: Uracil-DNA glycosylase (228 aa).

The active-site Proton acceptor is aspartate 64.

It belongs to the uracil-DNA glycosylase (UDG) superfamily. UNG family.

The protein resides in the cytoplasm. The enzyme catalyses Hydrolyzes single-stranded DNA or mismatched double-stranded DNA and polynucleotides, releasing free uracil.. Excises uracil residues from the DNA which can arise as a result of misincorporation of dUMP residues by DNA polymerase or due to deamination of cytosine. This Pectobacterium atrosepticum (strain SCRI 1043 / ATCC BAA-672) (Erwinia carotovora subsp. atroseptica) protein is Uracil-DNA glycosylase.